We begin with the raw amino-acid sequence, 191 residues long: dCTP deaminase, dUMP-forming (191 aa).

Residues 101–106 (KSSLGR), D119, 127–129 (TLE), Q148, Y162, and Q174 contribute to the dCTP site. E129 serves as the catalytic Proton donor/acceptor. The tract at residues 169 to 191 (SRYQGQRGPTASRSFQNFHRTQV) is disordered. Residues 171-191 (YQGQRGPTASRSFQNFHRTQV) show a composition bias toward polar residues.

Belongs to the dCTP deaminase family. In terms of assembly, homotrimer.

It carries out the reaction dCTP + 2 H2O = dUMP + NH4(+) + diphosphate. It participates in pyrimidine metabolism; dUMP biosynthesis; dUMP from dCTP: step 1/1. In terms of biological role, bifunctional enzyme that catalyzes both the deamination of dCTP to dUTP and the hydrolysis of dUTP to dUMP without releasing the toxic dUTP intermediate. This is dCTP deaminase, dUMP-forming from Streptomyces griseus subsp. griseus (strain JCM 4626 / CBS 651.72 / NBRC 13350 / KCC S-0626 / ISP 5235).